Reading from the N-terminus, the 940-residue chain is Receptor-like protein 9b (940 aa).

The signal sequence occupies residues 1-28 (MLMMFSPAFVMVMDLMVLVMMIMMMVSS). Residues 29-895 (LDAHGHISCI…GDEETTIDME (867 aa)) are Extracellular-facing. N-linked (GlcNAc...) asparagine glycans are attached at residues Asn53, Asn63, Asn66, Asn101, Asn115, and Asn151. LRR repeat units lie at residues 108–136 (FGEL…SFER), 137–163 (LKNL…TASS), 165–185 (KTLI…ELIN), 186–211 (LRNL…NFHN), 213–232 (QGLD…LCQL), 233–255 (KNLR…CFDS), 257–279 (TQLQ…LIRN), 281–304 (DSVE…LIAN), 306–330 (SKLK…SLQP), 331–354 (KFQL…IQHQ), 355–378 (KDLH…LLEK), 379–402 (YPNL…RLLN), 403–426 (HTLQ…IGKV), 427–450 (LPNI…SFGE), 452–475 (KDIK…FLIG), and 477–502 (SSLH…NFGS). Asn270 and Asn304 each carry an N-linked (GlcNAc...) asparagine glycan. N-linked (GlcNAc...) asparagine glycosylation is found at Asn361, Asn389, and Asn402. Asn434 and Asn463 each carry an N-linked (GlcNAc...) asparagine glycan. Residues 503-522 (LVVLIANNNLFTGIADGLRN) form an LRR 17; degenerate repeat. LRR repeat units follow at residues 523-546 (VQSL…WFGG), 547-570 (FFFA…LFSK), 571-593 (PTFK…HFTG), 595-615 (DMSL…STLI), 616-639 (KDVL…VKNE), 641-662 (ILSL…LCGL), 663-686 (RSIR…LNNV), 752-776 (FNFM…LGDL), 777-799 (QRIR…SFSN), 801-824 (TDIE…LSKL), and 826-849 (YMVV…KFST). An N-linked (GlcNAc...) asparagine glycan is attached at Asn685. Residues Asn783 and Asn799 are each glycosylated (N-linked (GlcNAc...) asparagine). Residues Asn831, Asn836, Asn867, and Asn873 are each glycosylated (N-linked (GlcNAc...) asparagine). The helical transmembrane segment at 896 to 916 (IFYWSLAATYGVTWITFIVFL) threads the bilayer. Residues 917–940 (CFDSPWRRVWFHFVDAFISLFKCV) lie on the Cytoplasmic side of the membrane.

Belongs to the RLP family.

Its subcellular location is the cell membrane. The protein is Receptor-like protein 9b of Arabidopsis thaliana (Mouse-ear cress).